We begin with the raw amino-acid sequence, 173 residues long: Alpha-crystallin A chain (173 aa).

Residue Met1 is modified to N-acetylmethionine. Positions 1-63 (MDVTIQHPWF…RTVLDSGISE (63 aa)) are required for complex formation with BFSP1 and BFSP2. Residue Gln6 is modified to Deamidated glutamine; partial. Residue Ser45 is modified to Phosphoserine. At Gln50 the chain carries Deamidated glutamine; partial. Residues 52-162 (LFRTVLDSGI…GHSERAIPVS (111 aa)) enclose the sHSP domain. Lys70 is modified (N6-acetyllysine). At Gln90 the chain carries Deamidated glutamine; partial. The residue at position 99 (Lys99) is an N6-acetyllysine. Residues His100, Glu102, and His107 each contribute to the Zn(2+) site. Ser122 is subject to Phosphoserine. Residue Asn123 is modified to Deamidated asparagine; partial. Positions 145 to 173 (KVQSGLDAGHSERAIPVSREEKPSSAPSS) are disordered. A Deamidated glutamine; partial modification is found at Gln147. The span at 153–167 (GHSERAIPVSREEKP) shows a compositional bias: basic and acidic residues. Position 154 (His154) interacts with Zn(2+). The O-linked (GlcNAc) serine glycan is linked to Ser162.

It belongs to the small heat shock protein (HSP20) family. In terms of assembly, heteromer composed of three CRYAA and one CRYAB subunits. Inter-subunit bridging via zinc ions enhances stability, which is crucial as there is no protein turn over in the lens. Can also form homodimers and homotetramers (dimers of dimers) which serve as the building blocks of homooligomers. Within homooligomers, the zinc-binding motif is created from residues of 3 different molecules. His-100 and Glu-102 from one molecule are ligands of the zinc ion, and His-107 and His-154 residues from additional molecules complete the site with tetrahedral coordination geometry. Part of a complex required for lens intermediate filament formation composed of BFSP1, BFSP2 and CRYAA. Acetylation at Lys-70 may increase chaperone activity. Post-translationally, undergoes age-dependent proteolytical cleavage at the C-terminus.

The protein resides in the cytoplasm. It localises to the nucleus. Functionally, contributes to the transparency and refractive index of the lens. Acts as a chaperone, preventing aggregation of various proteins under a wide range of stress conditions. Required for the correct formation of lens intermediate filaments as part of a complex composed of BFSP1, BFSP2 and CRYAA. The polypeptide is Alpha-crystallin A chain (CRYAA) (Ochotona princeps (Southern American pika)).